The chain runs to 496 residues: Probable cytosol aminopeptidase (496 aa).

Mn(2+)-binding residues include lysine 261 and aspartate 266. The active site involves lysine 273. Mn(2+)-binding residues include aspartate 284, aspartate 343, and glutamate 345. Arginine 347 is a catalytic residue.

Belongs to the peptidase M17 family. Mn(2+) is required as a cofactor.

It localises to the cytoplasm. The enzyme catalyses Release of an N-terminal amino acid, Xaa-|-Yaa-, in which Xaa is preferably Leu, but may be other amino acids including Pro although not Arg or Lys, and Yaa may be Pro. Amino acid amides and methyl esters are also readily hydrolyzed, but rates on arylamides are exceedingly low.. It carries out the reaction Release of an N-terminal amino acid, preferentially leucine, but not glutamic or aspartic acids.. Presumably involved in the processing and regular turnover of intracellular proteins. Catalyzes the removal of unsubstituted N-terminal amino acids from various peptides. This chain is Probable cytosol aminopeptidase, found in Bacillus licheniformis (strain ATCC 14580 / DSM 13 / JCM 2505 / CCUG 7422 / NBRC 12200 / NCIMB 9375 / NCTC 10341 / NRRL NRS-1264 / Gibson 46).